Reading from the N-terminus, the 251-residue chain is MSHIRRMPKRTDTLALFDVDGTLTPSRCKASHETLEFLRRLRDEVFTGIVGGSDLVKQEEQLGPTILEDFDYVFSENGLVAYEKGKLIHVQSLAKHLGEEKLKNVINCCLRYIADLDIPLKRGTFVEFRKGMLNVSPIGRNCSQQEREEFEKYDRVHSIRSRFVDYLKERFEGYDLQFSIGGQISFDVFPRGWDKTYCLSFVKHIPVIHFFGDKTFLGGNDYEIFQDARTIGHSVTSPEDTVKQCQQLFNL.

The active-site Nucleophile is D18. 2 residues coordinate Mg(2+): D18 and D20. The active-site Proton donor/acceptor is D20. Alpha-D-mannose 1-phosphate-binding residues include R27, R129, R140, R147, S185, and D187. The Mg(2+) site is built by D213, F225, D227, and T230.

Belongs to the eukaryotic PMM family. In terms of assembly, homodimer. It depends on Mg(2+) as a cofactor.

The protein localises to the cytoplasm. The enzyme catalyses alpha-D-mannose 1-phosphate = D-mannose 6-phosphate. It functions in the pathway nucleotide-sugar biosynthesis; GDP-alpha-D-mannose biosynthesis; alpha-D-mannose 1-phosphate from D-fructose 6-phosphate: step 2/2. Its function is as follows. Catalyzes the interconversion of mannose-6-phosphate to mannose-1-phosphate, the precursor for the synthesis of GDP-mannose. GDP-mannose is an essential sugar nucleotide for the synthesis of D-mannose-containing cell wall polysaccharides (galactomannans and glucomannans), glycolipids, glycoproteins and the antioxidant L-ascorbate. The sequence is that of Phosphomannomutase from Galdieria sulphuraria (Red alga).